The following is a 434-amino-acid chain: RHOMBOID-like protein 9, chloroplastic (434 aa).

The transit peptide at 1–68 directs the protein to the chloroplast; sequence MALFPLHHEV…SPRRRLCLVR (68 aa). 8 helical membrane passes run 182 to 202, 209 to 229, 238 to 258, 267 to 287, 289 to 309, 326 to 346, 352 to 372, and 399 to 419; these read FYAV…EAAA, MGLL…ILAG, MFLH…LTFG, LFTF…MSFL, TADP…AWLV, LFQK…FGPI, LGAL…LQLG, and FLLF…IGDG.

This sequence belongs to the peptidase S54 family.

The protein localises to the plastid. It localises to the chloroplast membrane. Probable rhomboid-type serine protease that catalyzes intramembrane proteolysis. The chain is RHOMBOID-like protein 9, chloroplastic from Arabidopsis thaliana (Mouse-ear cress).